Reading from the N-terminus, the 366-residue chain is Cobalt-precorrin-5B C(1)-methyltransferase (366 aa).

Belongs to the CbiD family.

The enzyme catalyses Co-precorrin-5B + S-adenosyl-L-methionine = Co-precorrin-6A + S-adenosyl-L-homocysteine. The protein operates within cofactor biosynthesis; adenosylcobalamin biosynthesis; cob(II)yrinate a,c-diamide from sirohydrochlorin (anaerobic route): step 6/10. Its function is as follows. Catalyzes the methylation of C-1 in cobalt-precorrin-5B to form cobalt-precorrin-6A. The polypeptide is Cobalt-precorrin-5B C(1)-methyltransferase (Hahella chejuensis (strain KCTC 2396)).